The chain runs to 91 residues: Small ribosomal subunit protein uS19 (91 aa).

This sequence belongs to the universal ribosomal protein uS19 family.

Its function is as follows. Protein S19 forms a complex with S13 that binds strongly to the 16S ribosomal RNA. This is Small ribosomal subunit protein uS19 from Desulfotalea psychrophila (strain LSv54 / DSM 12343).